The sequence spans 426 residues: GTPase Obg (426 aa).

Positions 1-158 (MFVDEVEIKV…RSIRLELKLV (158 aa)) constitute an Obg domain. The region spanning 159–330 (ADVGLIGFPN…LIYYTGDLLK (172 aa)) is the OBG-type G domain. GTP contacts are provided by residues 165 to 172 (GFPNVGKS), 190 to 194 (FTTLK), 212 to 215 (DIPG), 282 to 285 (NKID), and 311 to 313 (SAA). The Mg(2+) site is built by serine 172 and threonine 192. The OCT domain occupies 349–426 (DFADEEENIV…IGPMEFEYME (78 aa)).

The protein belongs to the TRAFAC class OBG-HflX-like GTPase superfamily. OBG GTPase family. As to quaternary structure, monomer. It depends on Mg(2+) as a cofactor.

The protein resides in the cytoplasm. An essential GTPase which binds GTP, GDP and possibly (p)ppGpp with moderate affinity, with high nucleotide exchange rates and a fairly low GTP hydrolysis rate. Plays a role in control of the cell cycle, stress response, ribosome biogenesis and in those bacteria that undergo differentiation, in morphogenesis control. The protein is GTPase Obg of Halothermothrix orenii (strain H 168 / OCM 544 / DSM 9562).